Consider the following 189-residue polypeptide: Large ribosomal subunit protein eL20 (189 aa).

It belongs to the eukaryotic ribosomal protein eL20 family.

It localises to the cytoplasm. In Tetrahymena thermophila, this protein is Large ribosomal subunit protein eL20 (RPL18A).